The primary structure comprises 188 residues: MIKGETIKNNSVKIVVATGIGAALFVIIGWLINIPTPIPNTSIQLQYAVLALFSALFGPLAGFLIGFIGHALKDSFLYGAPWWTWVLGSGLMGLFLGFGVKRESLTQGIFGNKEIIRFNIVQFLANVVVWGLIAPIGDILVYSEPANKVFTQGVVAGLVNALTIAVAGTLLLKLYAATRTKSGTLDKE.

5 consecutive transmembrane segments (helical) span residues 14-34 (IVVA…LINI), 48-68 (AVLA…IGFI), 80-100 (APWW…GFGV), 120-140 (IVQF…GDIL), and 152-172 (QGVV…TLLL).

This sequence belongs to the UPF0397 family.

Its subcellular location is the cell membrane. The chain is UPF0397 protein LACR_0367 from Lactococcus lactis subsp. cremoris (strain SK11).